Consider the following 263-residue polypeptide: Expansin-like A3 (263 aa).

Positions 1-20 (MRSFLYLIVVIFLFSSSVNA) are cleaved as a signal peptide. One can recognise an Expansin-like EG45 domain in the interval 41–147 (SGACAYGPMA…QRVPCNYGKR (107 aa)). 2 N-linked (GlcNAc...) asparagine glycosylation sites follow: Asn-99 and Asn-102. The 83-residue stretch at 161 to 243 (NYLAIKLLYQ…NWNSGRIYDA (83 aa)) folds into the Expansin-like CBD domain.

This sequence belongs to the expansin family. Expansin-like A subfamily.

The protein resides in the secreted. This chain is Expansin-like A3 (EXLA3), found in Arabidopsis thaliana (Mouse-ear cress).